A 524-amino-acid chain; its full sequence is MNNVGRPTRPEAANDAANGHETLTGARGLLQDEALIFELDGWNKTGVDLPPVTAAPSSDLNGLLRDAPIGLPGLSEPETVRHYVRLSQKNHAIDLALYPLGSCTMKHNPRLNEKMARLPGFSDIHPLQPQSTVQGALELMDRLAHWLKTLTGMPAVALTPKAGAHGELCGLLAIRAAHEAAGNGHRKTVLAPTSAHGTNPATAAFVGYTVVEIAQTEDGRVDLADLESKLGDHVAAIMVTNPNTCGLFERDVVEIARLTHAAGAYFYCDGANFNAIVGRVRPGDLGVDAMHINLHKTFSTPHGGGGPGAGPVVLSEALAPFAPTPWLTHGDNGFELAEHAGDDDAKTAFGRMSAFHGQMGMYVRAYAYMLSHGADGLRQVAEDAVLNANYIKAQLKDVMSPAFPEGPCMHEALFDDSWLEGTGVTTLDFAKAMIDEGFHPMTMYFPLVVHGAMLIEPTETESKHELDRFIAALRALAGAAKAGDTERFKGAPFHAPLRRLDETQAARKPRLRWKPVAAAPLAAE.

At lysine 296 the chain carries N6-(pyridoxal phosphate)lysine.

It belongs to the GcvP family. C-terminal subunit subfamily. As to quaternary structure, the glycine cleavage system is composed of four proteins: P, T, L and H. In this organism, the P 'protein' is a heterodimer of two subunits. Pyridoxal 5'-phosphate serves as cofactor.

The enzyme catalyses N(6)-[(R)-lipoyl]-L-lysyl-[glycine-cleavage complex H protein] + glycine + H(+) = N(6)-[(R)-S(8)-aminomethyldihydrolipoyl]-L-lysyl-[glycine-cleavage complex H protein] + CO2. Its function is as follows. The glycine cleavage system catalyzes the degradation of glycine. The P protein binds the alpha-amino group of glycine through its pyridoxal phosphate cofactor; CO(2) is released and the remaining methylamine moiety is then transferred to the lipoamide cofactor of the H protein. This Caulobacter vibrioides (strain ATCC 19089 / CIP 103742 / CB 15) (Caulobacter crescentus) protein is Probable glycine dehydrogenase (decarboxylating) subunit 2.